Here is a 178-residue protein sequence, read N- to C-terminus: Ribosome maturation factor RimM (178 aa).

The PRC barrel domain maps to 103–177 (SKDEYYFFEI…KIVVKVPEWL (75 aa)).

It belongs to the RimM family. Binds ribosomal protein uS19.

The protein localises to the cytoplasm. An accessory protein needed during the final step in the assembly of 30S ribosomal subunit, possibly for assembly of the head region. Essential for efficient processing of 16S rRNA. May be needed both before and after RbfA during the maturation of 16S rRNA. It has affinity for free ribosomal 30S subunits but not for 70S ribosomes. This chain is Ribosome maturation factor RimM, found in Thermosipho africanus (strain TCF52B).